A 146-amino-acid polypeptide reads, in one-letter code: Hemoglobin subunit beta-1 (146 aa).

The region spanning 2–146 (VWTNEERSII…VVSALGKQYH (145 aa)) is the Globin domain. The heme b site is built by histidine 63 and histidine 92.

It belongs to the globin family. In terms of assembly, hb1 is a heterotetramer of two alpha chains and two beta-1 chains. As to expression, red blood cells.

Its function is as follows. Involved in oxygen transport from gills to the various peripheral tissues. The sequence is that of Hemoglobin subunit beta-1 (hbb1) from Pseudaphritis urvillii (Congolli).